The chain runs to 261 residues: Imidazole glycerol phosphate synthase subunit HisF (261 aa).

Active-site residues include D12 and D131.

It belongs to the HisA/HisF family. As to quaternary structure, heterodimer of HisH and HisF.

It is found in the cytoplasm. It carries out the reaction 5-[(5-phospho-1-deoxy-D-ribulos-1-ylimino)methylamino]-1-(5-phospho-beta-D-ribosyl)imidazole-4-carboxamide + L-glutamine = D-erythro-1-(imidazol-4-yl)glycerol 3-phosphate + 5-amino-1-(5-phospho-beta-D-ribosyl)imidazole-4-carboxamide + L-glutamate + H(+). The protein operates within amino-acid biosynthesis; L-histidine biosynthesis; L-histidine from 5-phospho-alpha-D-ribose 1-diphosphate: step 5/9. In terms of biological role, IGPS catalyzes the conversion of PRFAR and glutamine to IGP, AICAR and glutamate. The HisF subunit catalyzes the cyclization activity that produces IGP and AICAR from PRFAR using the ammonia provided by the HisH subunit. The polypeptide is Imidazole glycerol phosphate synthase subunit HisF (Brucella melitensis biotype 2 (strain ATCC 23457)).